The following is a 64-amino-acid chain: Ferredoxin-like protein in nif region (64 aa).

Residues 2-30 (AFKIIASQCTQCGACEFECPSNAIELKGE) form the 4Fe-4S ferredoxin-type domain. Positions 10, 13, 16, 20, 39, 42, 51, and 55 each coordinate [4Fe-4S] cluster.

[4Fe-4S] cluster is required as a cofactor.

The polypeptide is Ferredoxin-like protein in nif region (fdxN) (Sinorhizobium fredii (strain NBRC 101917 / NGR234)).